We begin with the raw amino-acid sequence, 318 residues long: Ribose-phosphate pyrophosphokinase 2 (318 aa).

96–101 (RQDKKD) lines the ATP pocket. The Mg(2+) site is built by aspartate 128, histidine 130, aspartate 139, and aspartate 143. ATP is bound at residue histidine 130. The tract at residues 212 to 227 (KDRVAILVDDMADTCG) is binding of phosphoribosylpyrophosphate.

This sequence belongs to the ribose-phosphate pyrophosphokinase family. Homodimer. The active form is probably a hexamer composed of 3 homodimers. Mg(2+) is required as a cofactor.

It catalyses the reaction D-ribose 5-phosphate + ATP = 5-phospho-alpha-D-ribose 1-diphosphate + AMP + H(+). The protein operates within metabolic intermediate biosynthesis; 5-phospho-alpha-D-ribose 1-diphosphate biosynthesis; 5-phospho-alpha-D-ribose 1-diphosphate from D-ribose 5-phosphate (route I): step 1/1. Activated by magnesium and inorganic phosphate. Its function is as follows. Catalyzes the synthesis of phosphoribosylpyrophosphate (PRPP) that is essential for nucleotide synthesis. The protein is Ribose-phosphate pyrophosphokinase 2 (Prps2) of Rattus norvegicus (Rat).